The primary structure comprises 179 residues: Adenine phosphoribosyltransferase (179 aa).

This sequence belongs to the purine/pyrimidine phosphoribosyltransferase family. In terms of assembly, homodimer.

The protein localises to the cytoplasm. The catalysed reaction is AMP + diphosphate = 5-phospho-alpha-D-ribose 1-diphosphate + adenine. It functions in the pathway purine metabolism; AMP biosynthesis via salvage pathway; AMP from adenine: step 1/1. Catalyzes a salvage reaction resulting in the formation of AMP, that is energically less costly than de novo synthesis. The chain is Adenine phosphoribosyltransferase from Helicobacter acinonychis (strain Sheeba).